A 343-amino-acid chain; its full sequence is Anthranilate phosphoribosyltransferase (343 aa).

5-phospho-alpha-D-ribose 1-diphosphate is bound by residues G81, 84 to 85 (GD), 91 to 94 (NLST), 109 to 117 (KHGNRSVSS), and S121. Position 81 (G81) interacts with anthranilate. S93 is a Mg(2+) binding site. An anthranilate-binding site is contributed by N112. R167 provides a ligand contact to anthranilate. The Mg(2+) site is built by D226 and E227.

It belongs to the anthranilate phosphoribosyltransferase family. As to quaternary structure, homodimer. Requires Mg(2+) as cofactor.

The enzyme catalyses N-(5-phospho-beta-D-ribosyl)anthranilate + diphosphate = 5-phospho-alpha-D-ribose 1-diphosphate + anthranilate. It functions in the pathway amino-acid biosynthesis; L-tryptophan biosynthesis; L-tryptophan from chorismate: step 2/5. In terms of biological role, catalyzes the transfer of the phosphoribosyl group of 5-phosphorylribose-1-pyrophosphate (PRPP) to anthranilate to yield N-(5'-phosphoribosyl)-anthranilate (PRA). The polypeptide is Anthranilate phosphoribosyltransferase (Cellvibrio japonicus (strain Ueda107) (Pseudomonas fluorescens subsp. cellulosa)).